We begin with the raw amino-acid sequence, 259 residues long: Small ribosomal subunit protein mS23 (259 aa).

The protein belongs to the mitochondrion-specific ribosomal protein mS23 family. In terms of assembly, component of the mitochondrial small ribosomal subunit.

It is found in the mitochondrion. The polypeptide is Small ribosomal subunit protein mS23 (RSM25) (Pyricularia oryzae (strain 70-15 / ATCC MYA-4617 / FGSC 8958) (Rice blast fungus)).